The chain runs to 136 residues: Neuropeptide CCHamide-2 (136 aa).

The N-terminal stretch at 1–24 (MKSTISLLLVVICTVVLAAQQSQA) is a signal peptide. Cysteine 28 and cysteine 35 are disulfide-bonded. Histidine 39 carries the post-translational modification Histidine amide. The tract at residues 42–78 (RSLSPGSGSGTGVGGGMGEAASGGQEPDYVRPNGLLP) is disordered. Positions 43–136 (SLSPGSGSGT…ANSAELNGVN (94 aa)) are excised as a propeptide. The segment covering 48 to 59 (SGSGTGVGGGMG) has biased composition (gly residues).

Expressed in endocrine cells of the larval midgut (at protein level). Also expressed in endocrine cells of the midgut of adult males and females (at protein level). In the midgut, expression occurs mainly in the anterior region (at protein level). In the larval central nervous system, expressed in about 40 neurons in the brain hemispheres and ventral nerve cord (at protein level). Highly expressed in larval and adult gut with low levels in larval and adult brain. Very little expression in the larval fat body. However, another study shows high levels of expression in the larval fat body as well as the larval gut with low levels in the larval central nervous system.

It is found in the secreted. Its function is as follows. Ligand for the CCHamide-2 receptor CCHa2-R. In one study, shown to be an orexigenic peptide which induces appetite and stimulates food intake, leading to the release of insulin-like peptides which stimulate growth. In another study, shown to be a nutrient-sensitive peptide derived from peripheral tissues which controls growth by directly regulating the production and release of insulin-like peptides. In Drosophila melanogaster (Fruit fly), this protein is Neuropeptide CCHamide-2.